A 930-amino-acid chain; its full sequence is Protocadherin gamma-A4 (930 aa).

A signal peptide spans 1-27 (MAAPYKSDRRGLIWICIFLGSLCDIRA). Cadherin domains follow at residues 28 to 132 (EQIR…APSF), 133 to 241 (GAQQ…APVF), 242 to 346 (TQPE…APEV), 347 to 451 (TVTS…PPTF), 452 to 561 (THAS…TPEI), and 569 to 682 (DGST…APID). At 28–691 (EQIRYSVPEE…DQEDSDITLY (664 aa)) the chain is on the extracellular side. 2 N-linked (GlcNAc...) asparagine glycosylation sites follow: Asn418 and Asn544. Residues 692–712 (LVVAVAAVSCVFLAFVIVLLI) form a helical membrane-spanning segment. Residues 713–930 (HRLRRWHSTR…KKKSGKKEKK (218 aa)) are Cytoplasmic-facing. Disordered regions lie at residues 803–839 (SSLQ…WPNN) and 900–930 (ATLT…KEKK). Over residues 920–930 (NKKKSGKKEKK) the composition is skewed to basic residues.

The protein localises to the cell membrane. Potential calcium-dependent cell-adhesion protein. May be involved in the establishment and maintenance of specific neuronal connections in the brain. This Mus musculus (Mouse) protein is Protocadherin gamma-A4.